The following is an 82-amino-acid chain: UPF0437 protein in nifX-nifW intergenic region (82 aa).

Belongs to the UPF0437 family.

The protein is UPF0437 protein in nifX-nifW intergenic region of Frankia alni.